A 207-amino-acid chain; its full sequence is Guanylate kinase (207 aa).

Residues 6–185 form the Guanylate kinase-like domain; it reads GLLIVLSGPS…AKNRIQSIVE (180 aa). Residue 13–20 coordinates ATP; that stretch reads GPSGVGKG.

This sequence belongs to the guanylate kinase family.

The protein resides in the cytoplasm. It catalyses the reaction GMP + ATP = GDP + ADP. Its function is as follows. Essential for recycling GMP and indirectly, cGMP. The sequence is that of Guanylate kinase from Staphylococcus epidermidis (strain ATCC 12228 / FDA PCI 1200).